The chain runs to 95 residues: Small ribosomal subunit protein bS18 (95 aa).

This sequence belongs to the bacterial ribosomal protein bS18 family. In terms of assembly, part of the 30S ribosomal subunit. Forms a tight heterodimer with protein bS6.

Binds as a heterodimer with protein bS6 to the central domain of the 16S rRNA, where it helps stabilize the platform of the 30S subunit. This chain is Small ribosomal subunit protein bS18, found in Ehrlichia ruminantium (strain Gardel).